Consider the following 275-residue polypeptide: Putative methylglyoxal reductase DkgA (275 aa).

The active-site Proton donor is tyrosine 51. Substrate is bound at residue histidine 107. 187–241 (SPLAQGGEGVFDQKVIRELADKYGKTPAQIVIRWHLDCGLVVIPKSVTPSRIAEN) serves as a coordination point for NADP(+).

It belongs to the aldo/keto reductase family. As to quaternary structure, monomer.

The protein resides in the cytoplasm. It carries out the reaction hydroxyacetone + NADP(+) = methylglyoxal + NADPH + H(+). Aldo-keto reductase that significantly contributes to cellular methylglyoxal detoxification by catalyzing the NADPH-dependent conversion of methylglyoxal to acetol. The protein is Putative methylglyoxal reductase DkgA of Salmonella typhi.